A 1002-amino-acid chain; its full sequence is Lon protease homolog, mitochondrial (1002 aa).

The Lon N-terminal domain maps to 102-313 (VIALPLPHRP…LTLELVKKEM (212 aa)). 468 to 475 (GPPGVGKT) lines the ATP pocket. A Lon proteolytic domain is found at 811 to 995 (QTPVGVVMGL…NEIFDIAFQS (185 aa)). Catalysis depends on residues Ser901 and Lys944.

It belongs to the peptidase S16 family. As to quaternary structure, homohexamer or homoheptamer. Organized in a ring with a central cavity.

Its subcellular location is the mitochondrion matrix. The catalysed reaction is Hydrolysis of proteins in presence of ATP.. Its function is as follows. ATP-dependent serine protease that mediates the selective degradation of misfolded, unassembled or oxidatively damaged polypeptides as well as certain short-lived regulatory proteins in the mitochondrial matrix. May also have a chaperone function in the assembly of inner membrane protein complexes. Participates in the regulation of mitochondrial gene expression and in the maintenance of the integrity of the mitochondrial genome. Binds to mitochondrial DNA in a site-specific manner. This chain is Lon protease homolog, mitochondrial, found in Oryza sativa subsp. indica (Rice).